We begin with the raw amino-acid sequence, 159 residues long: Ribosomal RNA large subunit methyltransferase H (159 aa).

Residues Leu-76, Gly-108, and 127-132 (FSKMTF) contribute to the S-adenosyl-L-methionine site.

Belongs to the RNA methyltransferase RlmH family. In terms of assembly, homodimer.

The protein localises to the cytoplasm. It catalyses the reaction pseudouridine(1915) in 23S rRNA + S-adenosyl-L-methionine = N(3)-methylpseudouridine(1915) in 23S rRNA + S-adenosyl-L-homocysteine + H(+). Functionally, specifically methylates the pseudouridine at position 1915 (m3Psi1915) in 23S rRNA. This Staphylococcus carnosus (strain TM300) protein is Ribosomal RNA large subunit methyltransferase H.